Consider the following 155-residue polypeptide: HTH-type transcriptional repressor MdtR (155 aa).

One can recognise an HTH marR-type domain in the interval 4-140 (ADQLMSDIQL…AAHITAKLAQ (137 aa)). Residues 54–77 (VSEIAERMEVKPSAVTLMADRLEQ) constitute a DNA-binding region (H-T-H motif).

Homodimer.

It is found in the cytoplasm. The binding of MdtR to the mdtRP promoter region is severely inhibited by adding excess concentrations of fusidic acid or novobiocin but not by actinomycin or streptomycin. In terms of biological role, repressor of the multidrug resistance operon mdtRP. Acts by binding directly to the mdtRP promoter region, leading to the repression of its expression. This is HTH-type transcriptional repressor MdtR from Bacillus subtilis (strain 168).